The chain runs to 218 residues: MGGKWSKMAGWSTVRERMRRAEPARERMRRAEPRAEPAADGVGAVSRDLEKHGAITSSNTAATNADCAWLEAQEDEEVGFPVKPQVPLRPMTYKAAVDLSHFLKEKGGLEGLIHSQQRQDILDLWVYHTQGYFPDWQNYTPGPGVRYPLTFGWCFKLVPVEPEKIEEANEGENNSLLHPMSQHGMDDPEREVLQWRFDSRLAFHHMARELHPEYYKNC.

Positions 1 to 44 are disordered; sequence MGGKWSKMAGWSTVRERMRRAEPARERMRRAEPRAEPAADGVGA. Gly-2 carries N-myristoyl glycine; by host lipidation. The residue at position 6 (Ser-6) is a Phosphoserine; by host. The span at 14–37 shows a compositional bias: basic and acidic residues; it reads VRERMRRAEPARERMRRAEPRAEP. The segment at 74 to 77 is acidic; interacts with host PACS1 and PACS2; stabilizes the interaction of NEF/MHC-I with host AP1M1; necessary for MHC-I internalization; sequence EDEE. The interval 81–90 is SH3-binding; interaction with Src family tyrosine kinases; that stretch reads PVKPQVPLRP. Residues 84–87 carry the PxxP; stabilizes the interaction of NEF/MHC-I with host AP1M1; necessary for MHC-I internalization motif; it reads PQVP. Residues 120–136 form a mediates dimerization, Nef-PTE1 interaction region; the sequence is DILDLWVYHTQGYFPDW. A binding to ATP6V1H region spans residues 160-192; it reads VEPEKIEEANEGENNSLLHPMSQHGMDDPEREV. Positions 176–177 match the Dileucine internalization motif; necessary for CD4 internalization motif; sequence LL. The Diacidic; necessary for CD4 internalization motif lies at 186-187; the sequence is DD.

The protein belongs to the lentivirus primate group Nef protein family. Monomer; cytosolic form. Homodimer; membrane bound form. Interacts with Nef associated p21-activated kinase (PAK2); this interaction activates PAK2. Associates with the Nef-MHC-I-AP1 complex; this complex is required for MHC-I internalization. Interacts (via C-terminus) with host PI3-kinase. Interacts with host PACS1; this interaction seems to be weak. Interacts with host PACS2. Interacts with host LCK and MAPK3; these interactions inhibit the kinase activity of the latter. Interacts with host ATP6V1H; this interaction may play a role in CD4 endocytosis. Associates with the CD4-Nef-AP2 complex; this complex is required for CD4 internalization. Interacts with host AP2 subunit alpha and AP2 subunit sigma2. Interacts with TCR-zeta chain; this interaction up-regulates the Fas ligand (FasL) surface expression. Interacts with host HCK, LYN, and SRC; these interactions activate the Src family kinases. Interacts with MAP3K5; this interaction inhibits the Fas and TNFR-mediated death signals. Interacts with beta-COP and PTE1. Interacts with human RACK1; this increases Nef phosphorylation by PKC. Interacts with TP53; this interaction decreases the half-life of TP53, protecting the infected cell against p53-mediated apoptosis. In terms of processing, the virion-associated Nef proteins are cleaved by the viral protease to release the soluble C-terminal core protein. Nef is probably cleaved concomitantly with viral structural proteins on maturation of virus particles. Myristoylated. Post-translationally, phosphorylated on serine residues, probably by host PKCdelta and theta.

The protein resides in the host cell membrane. Its subcellular location is the virion. It is found in the secreted. It localises to the host Golgi apparatus membrane. Functionally, factor of infectivity and pathogenicity, required for optimal virus replication. Alters numerous pathways of T-lymphocyte function and down-regulates immunity surface molecules in order to evade host defense and increase viral infectivity. Alters the functionality of other immunity cells, like dendritic cells, monocytes/macrophages and NK cells. In infected CD4(+) T-lymphocytes, down-regulates the surface MHC-I, mature MHC-II, CD4, CD28, CCR5 and CXCR4 molecules. Mediates internalization and degradation of host CD4 through the interaction of with the cytoplasmic tail of CD4, the recruitment of AP-2 (clathrin adapter protein complex 2), internalization through clathrin coated pits, and subsequent transport to endosomes and lysosomes for degradation. Diverts host MHC-I molecules to the trans-Golgi network-associated endosomal compartments by an endocytic pathway to finally target them for degradation. MHC-I down-regulation may involve AP-1 (clathrin adapter protein complex 1) or possibly Src family kinase-ZAP70/Syk-PI3K cascade recruited by PACS2. In consequence infected cells are masked for immune recognition by cytotoxic T-lymphocytes. Decreasing the number of immune receptors also prevents reinfection by more HIV particles (superinfection). Down-regulates host SERINC3 and SERINC5 thereby excluding these proteins from the viral particles. Virion infectivity is drastically higher when SERINC3 or SERINC5 are excluded from the viral envelope, because these host antiviral proteins impair the membrane fusion event necessary for subsequent virion penetration. Its function is as follows. Bypasses host T-cell signaling by inducing a transcriptional program nearly identical to that of anti-CD3 cell activation. Interaction with TCR-zeta chain up-regulates the Fas ligand (FasL). Increasing surface FasL molecules and decreasing surface MHC-I molecules on infected CD4(+) cells send attacking cytotoxic CD8+ T-lymphocytes into apoptosis. In terms of biological role, plays a role in optimizing the host cell environment for viral replication without causing cell death by apoptosis. Protects the infected cells from apoptosis in order to keep them alive until the next virus generation is ready to strike. Inhibits the Fas and TNFR-mediated death signals by blocking MAP3K5/ASK1. Decreases the half-life of TP53, protecting the infected cell against p53-mediated apoptosis. Inhibits the apoptotic signals regulated by the Bcl-2 family proteins through the formation of a Nef/PI3-kinase/PAK2 complex that leads to activation of PAK2 and induces phosphorylation of host BAD. Functionally, extracellular Nef protein targets CD4(+) T-lymphocytes for apoptosis by interacting with CXCR4 surface receptors. The chain is Protein Nef from Homo sapiens (Human).